The chain runs to 178 residues: Protein GrpE (178 aa).

Pro residues predominate over residues 1–11; the sequence is MSENQNPPPSP. The tract at residues 1-23 is disordered; sequence MSENQNPPPSPEEIEAAMSANAA.

Belongs to the GrpE family. As to quaternary structure, homodimer.

The protein localises to the cytoplasm. Functionally, participates actively in the response to hyperosmotic and heat shock by preventing the aggregation of stress-denatured proteins, in association with DnaK and GrpE. It is the nucleotide exchange factor for DnaK and may function as a thermosensor. Unfolded proteins bind initially to DnaJ; upon interaction with the DnaJ-bound protein, DnaK hydrolyzes its bound ATP, resulting in the formation of a stable complex. GrpE releases ADP from DnaK; ATP binding to DnaK triggers the release of the substrate protein, thus completing the reaction cycle. Several rounds of ATP-dependent interactions between DnaJ, DnaK and GrpE are required for fully efficient folding. The protein is Protein GrpE of Acidovorax sp. (strain JS42).